The chain runs to 444 residues: MSVIHPLQNLLTSRDGSLVFAIIKNCILSFKYQSPNHWEFAGKWSDDFDKIQESRNTTAKEQQGQSSENENENKKLKSNKGDSIKRTAAKVPSPGLGAPPIYSYIRNLRLTSDESRLIACADSDKSLLVFDVDKTSKNVLKLRKRFCFSKRPNAISIAEDDTTVIIADKFGDVYSIDINSIPEEKFTQEPILGHVSMLTDVHLIKDSDGHQFIITSDRDEHIKISHYPQCFIVDKWLFGHKHFVSSICCGKDYLLLSAGGDDKIFAWDWKTGKNLSTFDYSSLIKPYLNDQHLAPPRFQNENNDIIEFAVSKIIKSKNLPFVAFFVEATKCIIILEMSEKQKGDLALKQIITFPYNVISLSAHNDEFQVTLDNKESSGVQKNFAKFIEYNLNENSFVVNNEKSNEFDSAIIQSVQGDSNLVTKKEEIYPLYNVSSLRKHGEHYS.

WD repeat units follow at residues 1-47 (MSVI…WSDD), 48-99 (FDKI…LGAP), 100-147 (PIYS…KRFC), 148-192 (FSKR…EPIL), 193-237 (GHVS…DKWL), 238-279 (FGHK…STFD), and 308-354 (FAVS…ITFP). Positions 55 to 92 (RNTTAKEQQGQSSENENENKKLKSNKGDSIKRTAAKVP) are disordered. Residues 71–85 (NENKKLKSNKGDSIK) are compositionally biased toward basic and acidic residues. Ser-93 carries the phosphoserine modification.

The protein belongs to the WD repeat TRM82 family. Forms a heterodimer with the catalytic subunit TRM8.

The protein resides in the nucleus. The protein operates within tRNA modification; N(7)-methylguanine-tRNA biosynthesis. Functionally, required for the formation of N(7)-methylguanine at position 46 (m7G46) in tRNA, a modification required to maintain stability of tRNAs; its absence resulting in tRNA decay. In the complex, it is required to stabilize and induce conformational changes of the catalytic subunit. The protein is tRNA (guanine-N(7)-)-methyltransferase non-catalytic subunit TRM82 of Saccharomyces cerevisiae (strain RM11-1a) (Baker's yeast).